We begin with the raw amino-acid sequence, 221 residues long: Phosphoribosylformylglycinamidine synthase subunit PurQ (221 aa).

One can recognise a Glutamine amidotransferase type-1 domain in the interval 5-221; sequence TVGIVVFPGS…LYTLRSLITQ (217 aa). Residue C89 is the Nucleophile of the active site. Catalysis depends on residues H197 and E199.

Part of the FGAM synthase complex composed of 1 PurL, 1 PurQ and 2 PurS subunits.

Its subcellular location is the cytoplasm. The enzyme catalyses N(2)-formyl-N(1)-(5-phospho-beta-D-ribosyl)glycinamide + L-glutamine + ATP + H2O = 2-formamido-N(1)-(5-O-phospho-beta-D-ribosyl)acetamidine + L-glutamate + ADP + phosphate + H(+). It carries out the reaction L-glutamine + H2O = L-glutamate + NH4(+). It participates in purine metabolism; IMP biosynthesis via de novo pathway; 5-amino-1-(5-phospho-D-ribosyl)imidazole from N(2)-formyl-N(1)-(5-phospho-D-ribosyl)glycinamide: step 1/2. In terms of biological role, part of the phosphoribosylformylglycinamidine synthase complex involved in the purines biosynthetic pathway. Catalyzes the ATP-dependent conversion of formylglycinamide ribonucleotide (FGAR) and glutamine to yield formylglycinamidine ribonucleotide (FGAM) and glutamate. The FGAM synthase complex is composed of three subunits. PurQ produces an ammonia molecule by converting glutamine to glutamate. PurL transfers the ammonia molecule to FGAR to form FGAM in an ATP-dependent manner. PurS interacts with PurQ and PurL and is thought to assist in the transfer of the ammonia molecule from PurQ to PurL. In Prochlorococcus marinus subsp. pastoris (strain CCMP1986 / NIES-2087 / MED4), this protein is Phosphoribosylformylglycinamidine synthase subunit PurQ.